Here is a 1292-residue protein sequence, read N- to C-terminus: MTEEPKPVTPVLRDGEAGLDTTAPTEAGSLGEEAPKKEADGIVDVPDAEQQKQEAPQQGFSAYVKLWAWCEPIDVVLRICGFFAAVASGTALPLMTIIFGKFVNIFNDFGVGKISGDDFRAQISKNALWFVYLFIGKFALVYIHTICFNITAIRSVRKLRLQYIRAILRQEMAYFDTYTPGSVATRISNNANLIQTGMSEKVGTCCQGVAMLISAFVVAFTQSWRLTLPVATSIPTAVTLVGITVALDAKLEAKILDIYSKAGGLVEETLGSIRVVVAFGAGDRLSKKYDNHLEAAKGFGVKKGPVLGIQYSSEFFIMYCAYALAFWYGIKLLLQGKIGSGGDILTVLFSIVIGTSSLTMIAPTLGEFTKAGAAANDVLNMINRVPEIDSLSAEGLKPSSVKGDLELSNAVFSYPARPTIRVLDGVNLKIPARKVTALVGASGSGKSTIIGLLERWYDPASGSITLDGVDIKDLNVGWLRRQIGLVQQEPVLFNDTIYTNVLYGLPPDEIAQMDEEKKRELVRQACIESNADDFIQGFPKGYDTIVGERGSLLSGGQRQRVAIARSIISNPPILLLDEATSALDPTAEAIVQAALDKVSQSRTTVLIAHKLSTVKKADNIIVMNKGQVIEQGTHESLLDTKGQYWSLVNAQSLSLASDDSSSDTDKETDTQPAEILEKHATTKSTHSKVPHEVAAESEDVARKFSLFKCLLIIFYEQRRHWLFFLLGGIASVVSGGAFPAQAILFSRIVTTFQLPRDQWQEKGDFWALMFFVLALCILLTYASIGFFLTVAAFRSSKFYRSEYFKAMISQDIAYFDKPANSSGSLTARLSTDPQNLQDLLSSNIGLILIVIVSLLAVSLLALVTGWKLALVSLFGCLPPLFLAGFIRMRMEMQAQDKNAKLYLESARFASEAVNSIRTVSSLTLESTVYNNYGDRLKRPVARSLKYTAIAMIFFGFSDSVDTAAMALAFWYGGRLMSYGEYDAQQFFVIFIAVIFGGQAAGFIFGFTMNTTKAHAAANHIIHLRGQVAPINGSTGEEPASTEDSDVAVEFRNVSFSYPTRPDQPVLRKINLNIRHGQNVGLVGPSGCGKTTMIALLERFYDVTSGDILINGKPLTDIDVTKYRETASLVSQETTLYQGTIRENILLGVTRDVPDEEIHQACKDANIHDFIISLPEGYNTEAGSRGLSFSGGQRQRLATARALLRNPDFLFLDEATSALDTESERVVQAALEHAKRGRTTIAVAHRLSTVQDCDAIFVLEAGKIVEQGTHQELLRRKGRYFEMCKAQSLDREA.

Residues 1-43 (MTEEPKPVTPVLRDGEAGLDTTAPTEAGSLGEEAPKKEADGIV) are disordered. Helical transmembrane passes span 79–99 (ICGF…TIIF) and 128–148 (LWFV…TICF). One can recognise an ABC transmembrane type-1 1 domain in the interval 81–370 (GFFAAVASGT…IAPTLGEFTK (290 aa)). N149 carries an N-linked (GlcNAc...) asparagine glycan. 4 consecutive transmembrane segments (helical) span residues 202–222 (VGTC…AFTQ), 226–246 (LTLP…ITVA), 314–334 (EFFI…KLLL), and 344–364 (ILTV…IAPT). The region spanning 405 to 650 (LELSNAVFSY…KGQYWSLVNA (246 aa)) is the ABC transporter 1 domain. ATP is bound at residue 440-447 (GASGSGKS). N-linked (GlcNAc...) asparagine glycosylation occurs at N494. Positions 656–691 (ASDDSSSDTDKETDTQPAEILEKHATTKSTHSKVPH) are disordered. Over residues 663–680 (DTDKETDTQPAEILEKHA) the composition is skewed to basic and acidic residues. A run of 2 helical transmembrane segments spans residues 720-740 (HWLF…AFPA) and 768-788 (LMFF…GFFL). The ABC transmembrane type-1 2 domain occupies 725–1012 (LLGGIASVVS…IFGFTMNTTK (288 aa)). N820 carries an N-linked (GlcNAc...) asparagine glycan. The next 4 membrane-spanning stretches (helical) occupy residues 844–864 (IGLI…ALVT), 866–886 (WKLA…AGFI), 949–969 (IAMI…ALAF), and 986–1006 (FFVI…IFGF). 3 N-linked (GlcNAc...) asparagine glycosylation sites follow: N1009, N1031, and N1052. Residues 1048-1285 (VEFRNVSFSY…KGRYFEMCKA (238 aa)) enclose the ABC transporter 2 domain. 1083–1090 (GPSGCGKT) is a binding site for ATP.

Belongs to the ABC transporter superfamily. ABCB family. Multidrug resistance exporter (TC 3.A.1.201) subfamily.

It localises to the cell membrane. It carries out the reaction itraconazole(in) + ATP + H2O = itraconazole(out) + ADP + phosphate + H(+). Pleiotropic ABC efflux transporter involved in the modulation susceptibility to itraconazole. The protein is ABC multidrug transporter MDR5 of Trichophyton rubrum (strain ATCC MYA-4607 / CBS 118892) (Athlete's foot fungus).